The chain runs to 401 residues: Beta-ketoadipyl-CoA thiolase (401 aa).

The Acyl-thioester intermediate role is filled by C91. Residues H357 and C387 each act as proton acceptor in the active site.

This sequence belongs to the thiolase-like superfamily. Thiolase family. As to quaternary structure, homotetramer.

It catalyses the reaction succinyl-CoA + acetyl-CoA = 3-oxoadipyl-CoA + CoA. The protein operates within aromatic compound metabolism; beta-ketoadipate pathway; acetyl-CoA and succinyl-CoA from 3-oxoadipate: step 2/2. Its function is as follows. Catalyzes thiolytic cleavage of beta-ketoadipyl-CoA to succinyl-CoA and acetyl-CoA. In Pseudomonas knackmussii (strain DSM 6978 / CCUG 54928 / LMG 23759 / B13), this protein is Beta-ketoadipyl-CoA thiolase (pcaF).